Reading from the N-terminus, the 350-residue chain is tRNA uridine(34) hydroxylase (350 aa).

In terms of domain architecture, Rhodanese spans 146-240; it reads DDPDTLFVDM…YARKAKEQGL (95 aa). The active-site Cysteine persulfide intermediate is Cys200.

This sequence belongs to the TrhO family.

It carries out the reaction uridine(34) in tRNA + AH2 + O2 = 5-hydroxyuridine(34) in tRNA + A + H2O. Functionally, catalyzes oxygen-dependent 5-hydroxyuridine (ho5U) modification at position 34 in tRNAs. This Yersinia enterocolitica serotype O:8 / biotype 1B (strain NCTC 13174 / 8081) protein is tRNA uridine(34) hydroxylase.